A 118-amino-acid chain; its full sequence is Myotrophin (118 aa).

ANK repeat units follow at residues 1 to 30, 34 to 65, and 67 to 98; these read MGDK…DVNR, GGRK…NAAD, and HGIT…NVKG.

Belongs to the myotrophin family.

The protein localises to the cytoplasm. The protein resides in the nucleus. It localises to the perinuclear region. Functionally, regulates NF-kappa-B transcription factor activity. Promotes growth of cardiomyocytes, but not cardiomyocyte proliferation. Promotes cardiac muscle hypertrophy. Plays a role in the regulation of the growth of actin filaments. Inhibits the activity of the F-actin-capping protein complex. This chain is Myotrophin (mtpn), found in Xenopus laevis (African clawed frog).